The following is a 106-amino-acid chain: Small ribosomal subunit protein bS20 (106 aa).

The span at 1 to 32 (MAQKKPKRNLSALKRHRQSLKRRLRNKAKKSA) shows a compositional bias: basic residues. The segment at 1–33 (MAQKKPKRNLSALKRHRQSLKRRLRNKAKKSAI) is disordered.

It belongs to the bacterial ribosomal protein bS20 family.

Its function is as follows. Binds directly to 16S ribosomal RNA. This is Small ribosomal subunit protein bS20 (rpsT) from Thermus thermophilus (strain ATCC BAA-163 / DSM 7039 / HB27).